Consider the following 110-residue polypeptide: UPF0060 membrane protein Bcep1808_1236 (110 aa).

3 helical membrane-spanning segments follow: residues 9 to 29, 34 to 54, and 66 to 86; these read ALFA…WLVL, PVWL…LLTL, and YGGV…GVAL.

The protein belongs to the UPF0060 family.

Its subcellular location is the cell inner membrane. This chain is UPF0060 membrane protein Bcep1808_1236, found in Burkholderia vietnamiensis (strain G4 / LMG 22486) (Burkholderia cepacia (strain R1808)).